The primary structure comprises 231 residues: Large ribosomal subunit protein uL1 (231 aa).

It belongs to the universal ribosomal protein uL1 family. As to quaternary structure, part of the 50S ribosomal subunit.

In terms of biological role, binds directly to 23S rRNA. The L1 stalk is quite mobile in the ribosome, and is involved in E site tRNA release. Protein L1 is also a translational repressor protein, it controls the translation of the L11 operon by binding to its mRNA. This is Large ribosomal subunit protein uL1 from Pseudomonas entomophila (strain L48).